Consider the following 984-residue polypeptide: Translation initiation factor IF-2 (984 aa).

Residues 32–402 (PAKNATSTLT…TQPQRAAKRK (371 aa)) are disordered. Low complexity predominate over residues 89–123 (PAETEAQASPAQPEAKAAAPAAEAEEAPAAKPAPA). The segment covering 126-136 (RKAEARTEAPR) has biased composition (basic and acidic residues). Composition is skewed to low complexity over residues 154–172 (APETAAPAQPAPEAQSAAP) and 187–197 (AETTESAPAEP). The segment covering 198 to 220 (AAEKAPAEKRRYEVSMEPEKDSV) has biased composition (basic and acidic residues). A compositionally biased stretch (low complexity) spans 255-270 (RPDPAAVQAQAAAAAQ). Residues 271–283 (AREERAERPDRGP) are compositionally biased toward basic and acidic residues. The segment covering 308–334 (GRPAPRSGAPRPGGARPAAGFGQPAQA) has biased composition (low complexity). In terms of domain architecture, tr-type G spans 482-651 (PRPPVVTIMG…ALQAEVLELK (170 aa)). Residues 491-498 (GHVDHGKT) form a G1 region. Residue 491–498 (GHVDHGKT) participates in GTP binding. Positions 516-520 (GITQH) are G2. A G3 region spans residues 537 to 540 (DTPG). GTP is bound by residues 537–541 (DTPGH) and 591–594 (NKID). The segment at 591 to 594 (NKID) is G4. A G5 region spans residues 627–629 (SAK).

The protein belongs to the TRAFAC class translation factor GTPase superfamily. Classic translation factor GTPase family. IF-2 subfamily.

It localises to the cytoplasm. In terms of biological role, one of the essential components for the initiation of protein synthesis. Protects formylmethionyl-tRNA from spontaneous hydrolysis and promotes its binding to the 30S ribosomal subunits. Also involved in the hydrolysis of GTP during the formation of the 70S ribosomal complex. The polypeptide is Translation initiation factor IF-2 (Oleidesulfovibrio alaskensis (strain ATCC BAA-1058 / DSM 17464 / G20) (Desulfovibrio alaskensis)).